The following is a 469-amino-acid chain: Transcription factor phomD (469 aa).

Positions 14 to 41 form a DNA-binding region, zn(2)-C6 fungal-type; it reads CNACNESKVRCSQRKPTCARCERNGVEC. Residues 49–118 are disordered; it reads THKDAPPISM…QQKEEAAAAA (70 aa). The segment covering 82 to 93 has biased composition (polar residues); the sequence is KANSNSSSNWHM. Residues 104-118 are compositionally biased toward low complexity; the sequence is QQQQQQQKEEAAAAA.

Its subcellular location is the nucleus. Functionally, transcription factor; part of the gene cluster that mediates the biosynthesis of the phomopsins, a group of hexapeptide mycotoxins which infects lupins and causes lupinosis disease in livestock. May play a role in the regulation of the production of phomopsins. This is Transcription factor phomD from Diaporthe leptostromiformis (Lupinosis disease fungus).